The chain runs to 560 residues: Light-independent protochlorophyllide reductase subunit N (560 aa).

Cys-24, Cys-49, and Cys-109 together coordinate [4Fe-4S] cluster. Over residues 173-182 (NSLFNQSSNS) the composition is skewed to low complexity. The tract at residues 173–210 (NSLFNQSSNSPENLKTLNTKKDTFQNSTENSKTFSAEK) is disordered. Residues 196–206 (FQNSTENSKTF) show a composition bias toward polar residues.

This sequence belongs to the BchN/ChlN family. As to quaternary structure, protochlorophyllide reductase is composed of three subunits; ChlL, ChlN and ChlB. Forms a heterotetramer of two ChlB and two ChlN subunits. [4Fe-4S] cluster serves as cofactor.

It is found in the plastid. Its subcellular location is the chloroplast. It catalyses the reaction chlorophyllide a + oxidized 2[4Fe-4S]-[ferredoxin] + 2 ADP + 2 phosphate = protochlorophyllide a + reduced 2[4Fe-4S]-[ferredoxin] + 2 ATP + 2 H2O. The protein operates within porphyrin-containing compound metabolism; chlorophyll biosynthesis (light-independent). Component of the dark-operative protochlorophyllide reductase (DPOR) that uses Mg-ATP and reduced ferredoxin to reduce ring D of protochlorophyllide (Pchlide) to form chlorophyllide a (Chlide). This reaction is light-independent. The NB-protein (ChlN-ChlB) is the catalytic component of the complex. This chain is Light-independent protochlorophyllide reductase subunit N, found in Tetradesmus obliquus (Green alga).